The chain runs to 216 residues: Adenylate kinase (216 aa).

10-15 (GAGKGT) lines the ATP pocket. The segment at 30 to 59 (STGDMFRAAMKAETELGLQAKSFIDKGALV) is NMP. AMP is bound by residues threonine 31, arginine 36, 57-59 (ALV), 85-88 (GFPR), and glutamine 92. Residues 126-163 (GRRICKECGATYHLEFNPPAKADVCDKCGGELYQRSDD) form an LID region. Residue arginine 127 coordinates ATP. Residues cysteine 130 and cysteine 133 each contribute to the Zn(2+) site. Position 136–137 (136–137 (TY)) interacts with ATP. Zn(2+) is bound by residues cysteine 150 and cysteine 153. 2 residues coordinate AMP: arginine 160 and arginine 171. Glutamine 199 provides a ligand contact to ATP.

This sequence belongs to the adenylate kinase family. In terms of assembly, monomer.

It localises to the cytoplasm. It catalyses the reaction AMP + ATP = 2 ADP. The protein operates within purine metabolism; AMP biosynthesis via salvage pathway; AMP from ADP: step 1/1. Its function is as follows. Catalyzes the reversible transfer of the terminal phosphate group between ATP and AMP. Plays an important role in cellular energy homeostasis and in adenine nucleotide metabolism. In Bacillus cytotoxicus (strain DSM 22905 / CIP 110041 / 391-98 / NVH 391-98), this protein is Adenylate kinase.